Here is a 113-residue protein sequence, read N- to C-terminus: MSDVSVPLTFSDVAAAKVKTLIAEEENPNLKLRVYITGGGCSGFQYGFTFDEDVNEGDMTIENDGVTLVVDPMSLQYLIGGKVDYTEGLEGSRFFIDNPNATTTCGCGASFSV.

The iron-sulfur cluster site is built by Cys41, Cys105, and Cys107.

It belongs to the HesB/IscA family. In terms of assembly, homodimer. Iron-sulfur cluster is required as a cofactor.

Functionally, required for insertion of 4Fe-4S clusters for at least IspG. This Aliivibrio fischeri (strain ATCC 700601 / ES114) (Vibrio fischeri) protein is Iron-sulfur cluster insertion protein ErpA.